Here is a 319-residue protein sequence, read N- to C-terminus: Ferrochelatase (319 aa).

Positions 193 and 274 each coordinate Fe cation.

Belongs to the ferrochelatase family.

It is found in the cytoplasm. It carries out the reaction heme b + 2 H(+) = protoporphyrin IX + Fe(2+). It participates in porphyrin-containing compound metabolism; protoheme biosynthesis; protoheme from protoporphyrin-IX: step 1/1. Functionally, catalyzes the ferrous insertion into protoporphyrin IX. The polypeptide is Ferrochelatase (Erwinia tasmaniensis (strain DSM 17950 / CFBP 7177 / CIP 109463 / NCPPB 4357 / Et1/99)).